The primary structure comprises 146 residues: Phospholipase A2, membrane associated (146 aa).

An N-terminal signal peptide occupies residues Met1 to Gly21. Cystine bridges form between Cys47–Cys139, Cys49–Cys65, Cys64–Cys119, Cys70–Cys146, Cys71–Cys112, Cys80–Cys105, and Cys98–Cys110. Ca(2+) contacts are provided by His48, Gly50, and Gly52. His68 is an active-site residue. Asp69 contacts Ca(2+). Residue Asp113 is part of the active site.

This sequence belongs to the phospholipase A2 family. It depends on Ca(2+) as a cofactor.

The protein localises to the secreted. It localises to the cell membrane. It is found in the mitochondrion outer membrane. The enzyme catalyses a 1,2-diacyl-sn-glycero-3-phosphoethanolamine + H2O = a 1-acyl-sn-glycero-3-phosphoethanolamine + a fatty acid + H(+). The catalysed reaction is 1-hexadecanoyl-2-(9Z-octadecenoyl)-sn-glycero-3-phosphoethanolamine + H2O = 1-hexadecanoyl-sn-glycero-3-phosphoethanolamine + (9Z)-octadecenoate + H(+). It catalyses the reaction 1-hexadecanoyl-2-(9Z,12Z-octadecadienoyl)-sn-glycero-3-phosphoethanolamine + H2O = 1-hexadecanoyl-sn-glycero-3-phosphoethanolamine + (9Z,12Z)-octadecadienoate + H(+). It carries out the reaction 1-hexadecanoyl-2-(5Z,8Z,11Z,14Z-eicosatetraenoyl)-sn-glycero-3-phosphoethanolamine + H2O = 1-hexadecanoyl-sn-glycero-3-phosphoethanolamine + (5Z,8Z,11Z,14Z)-eicosatetraenoate + H(+). The enzyme catalyses N-hexadecanoyl-1,2-di-(9Z-octadecenoyl)-sn-glycero-3-phosphoethanolamine + H2O = N-hexadecanoyl-1-(9Z-octadecenoyl)-sn-glycero-3-phosphoethanolamine + (9Z)-octadecenoate + H(+). The catalysed reaction is 1,2-dihexadecanoyl-sn-glycero-3-phospho-(1'-sn-glycerol) + H2O = 1-hexadecanoyl-sn-glycero-3-phospho-(1'-sn-glycerol) + hexadecanoate + H(+). It catalyses the reaction 1-hexadecanoyl-2-(9Z-octadecenoyl)-sn-glycero-3-phosphoglycerol + H2O = 1-hexadecanoyl-sn-glycero-3-phosphoglycerol + (9Z)-octadecenoate + H(+). It carries out the reaction 1-hexadecanoyl-2-(9Z-octadecenoyl)-sn-glycero-3-phospho-(1'-sn-glycerol) + H2O = 1-hexadecanoyl-sn-glycero-3-phospho-(1'-sn-glycerol) + (9Z)-octadecenoate + H(+). The enzyme catalyses a 1,2-diacyl-sn-glycero-3-phosphocholine + H2O = a 1-acyl-sn-glycero-3-phosphocholine + a fatty acid + H(+). The catalysed reaction is 1,2-dihexadecanoyl-sn-glycero-3-phosphocholine + H2O = 1-hexadecanoyl-sn-glycero-3-phosphocholine + hexadecanoate + H(+). It catalyses the reaction 1-hexadecanoyl-2-(9Z-octadecenoyl)-sn-glycero-3-phosphocholine + H2O = 1-hexadecanoyl-sn-glycero-3-phosphocholine + (9Z)-octadecenoate + H(+). It carries out the reaction 1-hexadecanoyl-2-(9Z,12Z-octadecadienoyl)-sn-glycero-3-phosphocholine + H2O = (9Z,12Z)-octadecadienoate + 1-hexadecanoyl-sn-glycero-3-phosphocholine + H(+). The enzyme catalyses 1-hexadecanoyl-2-(4Z,7Z,10Z,13Z,16Z,19Z-docosahexaenoyl)-sn-glycero-3-phosphocholine + H2O = (4Z,7Z,10Z,13Z,16Z,19Z)-docosahexaenoate + 1-hexadecanoyl-sn-glycero-3-phosphocholine + H(+). Its function is as follows. Secretory calcium-dependent phospholipase A2 that primarily targets extracellular phospholipids with implications in host antimicrobial defense, inflammatory response and tissue regeneration. Hydrolyzes the ester bond of the fatty acyl group attached at sn-2 position of phospholipids (phospholipase A2 activity) with preference for phosphatidylethanolamines and phosphatidylglycerols over phosphatidylcholines. Contributes to lipid remodeling of cellular membranes and generation of lipid mediators involved in pathogen clearance. Displays bactericidal activity against Gram-positive bacteria by directly hydrolyzing phospholipids of the bacterial membrane. Upon sterile inflammation, targets membrane phospholipids of extracellular mitochondria released from activated platelets, generating free unsaturated fatty acids such as arachidonate that is used by neighboring leukocytes to synthesize inflammatory eicosanoids such as leukotrienes. Simultaneously, by compromising mitochondrial membrane integrity, promotes the release in circulation of potent damage-associated molecular pattern molecules that activate the innate immune response. Plays a stem cell regulator role in the intestinal crypt. Within intracellular compartment mediates Paneth cell differentiation and its stem cell supporting functions by inhibiting Wnt signaling pathway in intestinal stem cell (ICS). Secreted in the intestinal lumen upon inflammation, acts in an autocrine way and promotes prostaglandin E2 synthesis that stimulates Wnt signaling pathway in ICS cells and tissue regeneration. May play a role in the biosynthesis of N-acyl ethanolamines that regulate energy metabolism and inflammation. Hydrolyzes N-acyl phosphatidylethanolamines to N-acyl lysophosphatidylethanolamines, which are further cleaved by a lysophospholipase D to release N-acyl ethanolamines. Independent of its catalytic activity, acts as a ligand for integrins. Binds to and activates integrins ITGAV:ITGB3, ITGA4:ITGB1 and ITGA5:ITGB1. Binds to a site (site 2) which is distinct from the classical ligand-binding site (site 1) and induces integrin conformational changes and enhanced ligand binding to site 1. Induces cell proliferation in an integrin-dependent manner. The polypeptide is Phospholipase A2, membrane associated (Pla2g2a) (Rattus norvegicus (Rat)).